Consider the following 218-residue polypeptide: Mitochondrial fission factor (218 aa).

Over Met1 to Met198 the chain is Cytoplasmic. Position 89 is a phosphothreonine (Thr89). Phosphoserine is present on residues Ser129, Ser131, Ser146, and Ser171. Residues Val167 to Met198 adopt a coiled-coil conformation. The chain crosses the membrane as a helical; Anchor for type IV membrane protein span at residues Val199–Phe216. The Mitochondrial intermembrane portion of the chain corresponds to Arg217–Arg218.

The protein belongs to the Tango11 family. As to quaternary structure, homodimer. Interacts with DNM1L. Interacts with C11orf65/MFI; the interaction inhibits MFF interaction with DNM1L.

The protein localises to the mitochondrion outer membrane. It localises to the peroxisome. The protein resides in the cytoplasmic vesicle. It is found in the secretory vesicle. Its subcellular location is the synaptic vesicle. Plays a role in mitochondrial and peroxisomal fission. Promotes the recruitment and association of the fission mediator dynamin-related protein 1 (DNM1L) to the mitochondrial surface. May be involved in regulation of synaptic vesicle membrane dynamics by recruitment of DNM1L to clathrin-containing vesicles. The chain is Mitochondrial fission factor (MFF) from Pongo abelii (Sumatran orangutan).